A 143-amino-acid chain; its full sequence is Large ribosomal subunit protein uL11 (143 aa).

It belongs to the universal ribosomal protein uL11 family. As to quaternary structure, part of the ribosomal stalk of the 50S ribosomal subunit. Interacts with L10 and the large rRNA to form the base of the stalk. L10 forms an elongated spine to which L12 dimers bind in a sequential fashion forming a multimeric L10(L12)X complex. Post-translationally, one or more lysine residues are methylated.

Forms part of the ribosomal stalk which helps the ribosome interact with GTP-bound translation factors. The protein is Large ribosomal subunit protein uL11 of Thioalkalivibrio sulfidiphilus (strain HL-EbGR7).